A 280-amino-acid polypeptide reads, in one-letter code: Energy-coupling factor transporter ATP-binding protein EcfA2 (280 aa).

The ABC transporter domain occupies 3–245 (INLQNVSYTY…VSLLEKKQLG (243 aa)). 40-47 (GHTGSGKS) contributes to the ATP binding site.

The protein belongs to the ABC transporter superfamily. Energy-coupling factor EcfA family. Forms a stable energy-coupling factor (ECF) transporter complex composed of 2 membrane-embedded substrate-binding proteins (S component), 2 ATP-binding proteins (A component) and 2 transmembrane proteins (T component).

The protein resides in the cell membrane. In terms of biological role, ATP-binding (A) component of a common energy-coupling factor (ECF) ABC-transporter complex. Unlike classic ABC transporters this ECF transporter provides the energy necessary to transport a number of different substrates. The polypeptide is Energy-coupling factor transporter ATP-binding protein EcfA2 (Streptococcus pyogenes serotype M3 (strain ATCC BAA-595 / MGAS315)).